We begin with the raw amino-acid sequence, 561 residues long: Potassium-transporting ATPase potassium-binding subunit (561 aa).

The next 10 membrane-spanning stretches (helical) occupy residues 4-24 (IIMQDVFFIVLLLVLAIPLGI), 65-85 (AGSVLAFSAIGFVFVMAVLML), 134-154 (GLTVQNFVSAATGIAVLFAVI), 177-197 (LYILLPLSLVLAILLVSQGVV), 253-273 (FTNLIEMLAILLIPVALVVMF), 285-305 (AIMTAMMIVFVVGIVAITISE), 380-400 (GLYGMIGFIILTVFIAGLLVG), 417-437 (MVCLLILVPPLLTLFGTAFAV), 484-504 (MVGALMMLFARFIPLIAALYL), and 528-548 (FIGLLIGVVVLVGALSFLPAL).

The protein belongs to the KdpA family. The system is composed of three essential subunits: KdpA, KdpB and KdpC.

Its subcellular location is the cell membrane. Functionally, part of the high-affinity ATP-driven potassium transport (or Kdp) system, which catalyzes the hydrolysis of ATP coupled with the electrogenic transport of potassium into the cytoplasm. This subunit binds the extracellular potassium ions and delivers the ions to the membrane domain of KdpB through an intramembrane tunnel. The protein is Potassium-transporting ATPase potassium-binding subunit of Listeria welshimeri serovar 6b (strain ATCC 35897 / DSM 20650 / CCUG 15529 / CIP 8149 / NCTC 11857 / SLCC 5334 / V8).